Consider the following 52-residue polypeptide: ATP synthase protein 8 (52 aa).

Residues 6-26 (PLLWLNLFLMFSATFVMFIVL) traverse the membrane as a helical segment.

It belongs to the ATPase protein 8 family. In terms of assembly, F-type ATPases have 2 components, CF(1) - the catalytic core - and CF(0) - the membrane proton channel.

The protein resides in the mitochondrion membrane. Its function is as follows. Mitochondrial membrane ATP synthase (F(1)F(0) ATP synthase or Complex V) produces ATP from ADP in the presence of a proton gradient across the membrane which is generated by electron transport complexes of the respiratory chain. F-type ATPases consist of two structural domains, F(1) - containing the extramembraneous catalytic core and F(0) - containing the membrane proton channel, linked together by a central stalk and a peripheral stalk. During catalysis, ATP synthesis in the catalytic domain of F(1) is coupled via a rotary mechanism of the central stalk subunits to proton translocation. Part of the complex F(0) domain. Minor subunit located with subunit a in the membrane. The polypeptide is ATP synthase protein 8 (MT-ATP8) (Penaeus monodon (Giant tiger prawn)).